We begin with the raw amino-acid sequence, 367 residues long: C-glycoside deglycosidase alpha subunit (367 aa).

E146 serves as a coordination point for Mg(2+). The active-site Proton acceptor is H148. Mg(2+) is bound by residues D178, H276, and E312.

The protein belongs to the C-glycoside deglycosidase alpha subunit family. Heterodimer composed of an alpha subunit (CarB1) and a beta subunit (CarC1). It depends on Mg(2+) as a cofactor.

The enzyme catalyses 3''-dehydroisovitexin = 1,5-anhydro-D-erythro-hex-1-en-3-ulose + apigenin. Its activity is regulated as follows. Activity is strongly reduced in the presence of chelating agents. Its function is as follows. Carbon-carbon bond-cleaving enzyme which participates in the metabolism of C-glycosides. Acts on the C6-glycosylated compound 3''-dehydroisovitexin (3''-oxo-isovitexin). Shows weak activity with 3''-dehydroisoorientin (3''-oxo-homoorientin) and 3'-dehydromangiferin (3'-oxo-mangiferin). The protein is C-glycoside deglycosidase alpha subunit of Arthrobacter globiformis (strain ATCC 8010 / DSM 20124 / JCM 1332 / NBRC 12137 / NCIMB 8907 / NRRL B-2979 / 168).